Consider the following 87-residue polypeptide: Large ribosomal subunit protein uL23c (87 aa).

It belongs to the universal ribosomal protein uL23 family. In terms of assembly, part of the 50S ribosomal subunit.

The protein resides in the plastid. The protein localises to the chloroplast. In terms of biological role, binds to 23S rRNA. The protein is Large ribosomal subunit protein uL23c (rpl23) of Bigelowiella natans (Pedinomonas minutissima).